Reading from the N-terminus, the 52-residue chain is Large ribosomal subunit protein bL33 (52 aa).

The protein belongs to the bacterial ribosomal protein bL33 family.

The sequence is that of Large ribosomal subunit protein bL33 (rpmG) from Chlamydia pneumoniae (Chlamydophila pneumoniae).